Here is a 518-residue protein sequence, read N- to C-terminus: U-box domain-containing protein 57 (518 aa).

Positions 86–142 (EEVRKVHILEEEIVTLKHQADTYLVQKEKAVTAYDQLKHERDNAVQQVNELRDQSTH) form a coiled coil. In terms of domain architecture, Protein kinase spans 159 to 409 (FKNAREVGDT…RPDLLNEVWI (251 aa)). The U-box domain maps to 434–508 (SVPAAFICPI…HGYLQQQQPN (75 aa)).

The enzyme catalyses S-ubiquitinyl-[E2 ubiquitin-conjugating enzyme]-L-cysteine + [acceptor protein]-L-lysine = [E2 ubiquitin-conjugating enzyme]-L-cysteine + N(6)-ubiquitinyl-[acceptor protein]-L-lysine.. It participates in protein modification; protein ubiquitination. Functionally, possesses E3 ubiquitin-protein ligase in vitro. May be involved in cell death signaling. This is U-box domain-containing protein 57 (PUB57) from Oryza sativa subsp. japonica (Rice).